The following is a 217-amino-acid chain: ATP phosphoribosyltransferase (217 aa).

It belongs to the ATP phosphoribosyltransferase family. Short subfamily. As to quaternary structure, heteromultimer composed of HisG and HisZ subunits.

It localises to the cytoplasm. The catalysed reaction is 1-(5-phospho-beta-D-ribosyl)-ATP + diphosphate = 5-phospho-alpha-D-ribose 1-diphosphate + ATP. The protein operates within amino-acid biosynthesis; L-histidine biosynthesis; L-histidine from 5-phospho-alpha-D-ribose 1-diphosphate: step 1/9. Its function is as follows. Catalyzes the condensation of ATP and 5-phosphoribose 1-diphosphate to form N'-(5'-phosphoribosyl)-ATP (PR-ATP). Has a crucial role in the pathway because the rate of histidine biosynthesis seems to be controlled primarily by regulation of HisG enzymatic activity. This Syntrophomonas wolfei subsp. wolfei (strain DSM 2245B / Goettingen) protein is ATP phosphoribosyltransferase.